Consider the following 336-residue polypeptide: UPF0324 membrane protein SP_0034 (336 aa).

8 helical membrane passes run 65–84 (LLQYAVVLLGFGLNISQVFA), 91–113 (PVILSTISIALIIAYLFQRFFAL), 118–140 (ATLVGVGSSICGGSAIAATAPVI), 153–175 (VIFFFNVLAALIFPTLGTWLHLS), 211–233 (SATIVKLTRTLAIIPITLFLSYW), 249–271 (VFPLFILYFILASLLTTLLTSLG), 286–305 (FLIVMAMSAIGLKTNLVAMV), and 312–334 (ILLGAICWIAIILTTLGMQTLIG).

It belongs to the UPF0324 family.

Its subcellular location is the cell membrane. This is UPF0324 membrane protein SP_0034 from Streptococcus pneumoniae serotype 4 (strain ATCC BAA-334 / TIGR4).